The sequence spans 267 residues: Glutamate 5-kinase (267 aa).

K14 contacts ATP. S54, D141, and N157 together coordinate substrate. ATP is bound by residues 177–178 (SD) and 219–225 (TGGMMSK).

This sequence belongs to the glutamate 5-kinase family.

The protein resides in the cytoplasm. It catalyses the reaction L-glutamate + ATP = L-glutamyl 5-phosphate + ADP. It participates in amino-acid biosynthesis; L-proline biosynthesis; L-glutamate 5-semialdehyde from L-glutamate: step 1/2. In terms of biological role, catalyzes the transfer of a phosphate group to glutamate to form L-glutamate 5-phosphate. This is Glutamate 5-kinase from Streptococcus thermophilus.